Consider the following 276-residue polypeptide: Undecaprenyl-diphosphatase 2 (276 aa).

The next 7 helical transmembrane spans lie at 3-23, 48-68, 92-112, 119-139, 196-216, 225-245, and 255-275; these read IWDI…EYAP, AANT…AFVF, LSIA…FLFE, LFSV…MLAA, ADFT…LSLI, DLLP…LFVV, and IKLV…FILF.

The protein belongs to the UppP family.

The protein resides in the cell membrane. The catalysed reaction is di-trans,octa-cis-undecaprenyl diphosphate + H2O = di-trans,octa-cis-undecaprenyl phosphate + phosphate + H(+). Functionally, catalyzes the dephosphorylation of undecaprenyl diphosphate (UPP). Confers resistance to bacitracin. In Bacillus licheniformis (strain ATCC 14580 / DSM 13 / JCM 2505 / CCUG 7422 / NBRC 12200 / NCIMB 9375 / NCTC 10341 / NRRL NRS-1264 / Gibson 46), this protein is Undecaprenyl-diphosphatase 2.